Consider the following 526-residue polypeptide: Bifunctional purine biosynthesis protein PurH (526 aa).

An MGS-like domain is found at 1–147 (MSVIKRALIS…KNWKHVAIVT (147 aa)).

It belongs to the PurH family.

The enzyme catalyses (6R)-10-formyltetrahydrofolate + 5-amino-1-(5-phospho-beta-D-ribosyl)imidazole-4-carboxamide = 5-formamido-1-(5-phospho-D-ribosyl)imidazole-4-carboxamide + (6S)-5,6,7,8-tetrahydrofolate. It carries out the reaction IMP + H2O = 5-formamido-1-(5-phospho-D-ribosyl)imidazole-4-carboxamide. The protein operates within purine metabolism; IMP biosynthesis via de novo pathway; 5-formamido-1-(5-phospho-D-ribosyl)imidazole-4-carboxamide from 5-amino-1-(5-phospho-D-ribosyl)imidazole-4-carboxamide (10-formyl THF route): step 1/1. It participates in purine metabolism; IMP biosynthesis via de novo pathway; IMP from 5-formamido-1-(5-phospho-D-ribosyl)imidazole-4-carboxamide: step 1/1. The polypeptide is Bifunctional purine biosynthesis protein PurH (Neisseria gonorrhoeae (strain ATCC 700825 / FA 1090)).